Reading from the N-terminus, the 244-residue chain is Phosphatidylinositol phosphate synthase (244 aa).

A run of 3 helical transmembrane segments spans residues 24–42 (YARA…FLIR), 49–66 (TVTL…LVFY), and 72–91 (FWGT…DGNM). 48-51 (DTVT) serves as a coordination point for a CDP-1,2-diacyl-sn-glycerol. The Mg(2+) site is built by aspartate 85 and aspartate 88. A CDP-1,2-diacyl-sn-glycerol is bound by residues glycine 89, arginine 93, and serine 99. Aspartate 106 and aspartate 110 together coordinate Mg(2+). Aspartate 110 functions as the Proton acceptor in the catalytic mechanism. A run of 3 helical transmembrane segments spans residues 117-137 (IFGG…LCAV), 174-190 (LVIS…HKFG), and 196-214 (VLLP…VTLI).

The protein belongs to the CDP-alcohol phosphatidyltransferase class-I family. Homodimer. The cofactor is Mg(2+).

It is found in the cell membrane. It catalyses the reaction a CDP-1,2-diacyl-sn-glycerol + 1D-myo-inositol 3-phosphate = a 1,2-diacyl-sn-glycero-3-phospho-(1D-myo-inositol-3-phosphate) + CMP + H(+). The catalysed reaction is 1,2-di-(9Z-octadecenoyl)-sn-glycero-3-cytidine-5'-diphosphate + 1D-myo-inositol 3-phosphate = 1,2-di-(9Z-octadecenoyl)-sn-glycero-3-phospho-(1D-myo-inositol-3-phosphate) + CMP + H(+). It participates in phospholipid metabolism; phosphatidylinositol phosphate biosynthesis. Catalyzes the conjugation of the 1'-hydroxyl group of D-myo-inositol-3-phosphate (also named L-myo-inositol-1-phosphate) with a lipid tail of cytidine diphosphate diacylglycerol (CDP-DAG), forming phosphatidylinositol phosphate (PIP) and CMP. PIP is a precursor of phosphatidylinositol (PI) which is an essential lipid required for cell wall formation. The polypeptide is Phosphatidylinositol phosphate synthase (Streptomyces avermitilis (strain ATCC 31267 / DSM 46492 / JCM 5070 / NBRC 14893 / NCIMB 12804 / NRRL 8165 / MA-4680)).